A 365-amino-acid polypeptide reads, in one-letter code: MAKRIVGSTPKQDGFRMPGEFEPQEKVWMIWPERPDNWRDGGKPVQEAFTNVAKAISQFTPMNVVVSQQQFQNCRRQLPPEITVYEMSNNDAWVRDCGPSFVINDHGEIRGVDWTFNAWGGLVDGLYFPWDQDDLVAQKICEIEHVDSYRTDDFVLEGGSFHVDGQGTVLTTEMCLLSEGRNPQLSKEAIEQKLCDYLNVEKVLWLGDGIDPEETNGHVDDVACFIAPGEVACIYTEDQNSPFYEAAQDAYQRLLKMTDAKGRQLKVHKLCCPVKNVTIKGSFKIDFVEGTMPREDGDICIASYMNFLITNDGVIVPQYGDENDHLALEQVQTMFPDKKIVGVNTVEVVYGGGNIHCITQQEPKR.

Agmatine-binding residues include E214 and D220. C357 functions as the Amidino-cysteine intermediate in the catalytic mechanism.

It belongs to the agmatine deiminase family. As to quaternary structure, tetramer of two homodimers.

It catalyses the reaction agmatine + H2O = N-carbamoylputrescine + NH4(+). The polypeptide is Putative agmatine deiminase (Enterococcus faecalis (strain ATCC 700802 / V583)).